Reading from the N-terminus, the 224-residue chain is MSNTLVIKITGKLFDTNASLIKKYVEIFKDLSGKYKLAIITGGGGLARKYIGYAREIGVSSNYWLDMIGIRSAQLNAYLLISSLYPKAYPEPVNNLEELLRIMNNYEIAVLGGLIPGQSTSSVALEVAEALGVSKVIDYSAIDKVYDKDPLKYPDAKPYDKISIAKLREILRQKQLPGEYALIDLRALDIAERSKITIIITHYKKPNTIYDILRGENPGTIIYP.

8–12 (KITGK) is a binding site for ATP. A UMP-binding site is contributed by Gly43. The ATP site is built by Gly44 and Arg48. UMP contacts are provided by residues Asp66 and 114 to 120 (LIPGQST). Residues Ser140, Tyr146, and Asp149 each coordinate ATP.

This sequence belongs to the UMP kinase family. Homohexamer.

It localises to the cytoplasm. It carries out the reaction UMP + ATP = UDP + ADP. It participates in pyrimidine metabolism; CTP biosynthesis via de novo pathway; UDP from UMP (UMPK route): step 1/1. With respect to regulation, inhibited by UTP. In terms of biological role, catalyzes the reversible phosphorylation of UMP to UDP. The sequence is that of Uridylate kinase from Staphylothermus marinus (strain ATCC 43588 / DSM 3639 / JCM 9404 / F1).